Here is a 397-residue protein sequence, read N- to C-terminus: Histidinol-phosphate aminotransferase (397 aa).

At K247 the chain carries N6-(pyridoxal phosphate)lysine.

The protein belongs to the class-II pyridoxal-phosphate-dependent aminotransferase family. Histidinol-phosphate aminotransferase subfamily. Homodimer. Pyridoxal 5'-phosphate is required as a cofactor.

It catalyses the reaction L-histidinol phosphate + 2-oxoglutarate = 3-(imidazol-4-yl)-2-oxopropyl phosphate + L-glutamate. It participates in amino-acid biosynthesis; L-histidine biosynthesis; L-histidine from 5-phospho-alpha-D-ribose 1-diphosphate: step 7/9. In Frankia casuarinae (strain DSM 45818 / CECT 9043 / HFP020203 / CcI3), this protein is Histidinol-phosphate aminotransferase.